Consider the following 276-residue polypeptide: MEQLIRDEMRVLPTIDPHFEIERRVAFIKKKLVESGCKSLVLGISGGVDSTTCGRLAQVAVDQLNQESNSNDYQFVAVRLPYGEQKDEEEAQLALSFIQPTHSVSVNIKAGVDGLHAASHVALEGTGLIPQDAAKVDFVKGNVKARARMVAQYEIAGYVGGLVLGTDHSAENITGFYTKFGDGACDLAPLFGLSKRQVRLVAETLGAPELLVKKVPTADLEELAPQKADEDALNLTYEQIDDFLEGKPVSEAVSARLVSIYKATQHKRQPIPTIYD.

43–50 is an ATP binding site; it reads GISGGVDS. Residue aspartate 49 coordinates Mg(2+). Arginine 146 contributes to the deamido-NAD(+) binding site. Threonine 166 contributes to the ATP binding site. Mg(2+) is bound at residue glutamate 171. Lysine 179 and aspartate 186 together coordinate deamido-NAD(+). The ATP site is built by lysine 195 and threonine 217. 266–267 lines the deamido-NAD(+) pocket; that stretch reads HK.

This sequence belongs to the NAD synthetase family. In terms of assembly, homodimer.

It catalyses the reaction deamido-NAD(+) + NH4(+) + ATP = AMP + diphosphate + NAD(+) + H(+). It participates in cofactor biosynthesis; NAD(+) biosynthesis; NAD(+) from deamido-NAD(+) (ammonia route): step 1/1. Functionally, catalyzes the ATP-dependent amidation of deamido-NAD to form NAD. Uses ammonia as a nitrogen source. The protein is NH(3)-dependent NAD(+) synthetase of Vibrio vulnificus (strain YJ016).